A 229-amino-acid chain; its full sequence is N-(5'-phosphoribosyl)anthranilate isomerase (229 aa).

It belongs to the TrpF family.

The catalysed reaction is N-(5-phospho-beta-D-ribosyl)anthranilate = 1-(2-carboxyphenylamino)-1-deoxy-D-ribulose 5-phosphate. It functions in the pathway amino-acid biosynthesis; L-tryptophan biosynthesis; L-tryptophan from chorismate: step 3/5. The protein is N-(5'-phosphoribosyl)anthranilate isomerase of Clostridium beijerinckii (strain ATCC 51743 / NCIMB 8052) (Clostridium acetobutylicum).